The following is a 1476-amino-acid chain: Copper-transporting ATPase 1 (1476 aa).

Topologically, residues 1–642 are cytoplasmic; that stretch reads MEPSMDVNSV…HKREIKQWRS (642 aa). 2 consecutive HMA domains span residues 8 to 74 and 85 to 151; these read NSVT…FDAL and TDTL…LETG. Residues Thr-18, Cys-19, and Cys-22 each contribute to the Cu(+) site. The residue at position 152 (Thr-152) is a Phosphothreonine. HMA domains are found at residues 171–237 and 276–342; these read VVLK…FPAF and STAT…PGQY. Cys-182, Cys-185, Cys-287, and Cys-290 together coordinate Cu(+). Phosphothreonine is present on Thr-326. Residues Ser-338, Ser-352, Ser-356, and Ser-361 each carry the phosphoserine modification. 3 HMA domains span residues 376-442, 478-544, and 554-620; these read QETV…FDAV, SKCY…FGAT, and GILK…FEAS. Positions 387, 390, 489, 492, 565, and 568 each coordinate Cu(+). Residues 643–665 form a helical membrane-spanning segment; that stretch reads SFLVSLFFCTPVMGLMMYMMAME. 2 N-linked (GlcNAc...) asparagine glycosylation sites follow: Asn-674 and Asn-685. Helical transmembrane passes span 695–717, 736–760, and 770–788; these read ILPGLSIMNLLSLLLCLPVQFFG, MDVLIVLATTIAFAYSLIILLVAMY, and SFDTPPMLFVFIALGRWLE. N-linked (GlcNAc...) asparagine glycosylation occurs at Asn-887. The chain crosses the membrane as a helical span at residues 930–952; the sequence is YFVPFIVLVSIATLLVWIIIGFQ. The N-linked (GlcNAc...) asparagine glycan is linked to Asn-953. A helical membrane pass occupies residues 978–998; sequence AFQASITVLCIACPCSLGLAT. Asp-1034 (4-aspartylphosphate intermediate) is an active-site residue. Residues Asn-1130 and Asn-1134 are each glycosylated (N-linked (GlcNAc...) asparagine). Helical transmembrane passes span 1347-1373 and 1379-1397; these read INFLFPLIYNLVGIPIAAGVFLPIGLV and GSAAMAASSVSVVLSSLFL. Residues Ser-1420 and Ser-1422 each carry the phosphoserine modification. The N-linked (GlcNAc...) asparagine glycan is linked to Asn-1448. Phosphoserine is present on residues Ser-1450, Ser-1453, Ser-1456, Ser-1459, Ser-1463, Ser-1466, and Ser-1476.

It belongs to the cation transport ATPase (P-type) (TC 3.A.3) family. Monomer. Interacts with PDZD11. Interacts with ATOX1 and COMMD1. Interacts with TYRP1. Directly interacts with SOD3; this interaction is copper-dependent and is required for SOD3 activity. Expressed in most tissues except liver.

It is found in the golgi apparatus. The protein localises to the trans-Golgi network membrane. It localises to the cell membrane. It catalyses the reaction Cu(+)(in) + ATP + H2O = Cu(+)(out) + ADP + phosphate + H(+). In terms of biological role, may function in the export of copper from the cytoplasm to an intracellular organelle. It may serve as well for the export of other metals. The chain is Copper-transporting ATPase 1 (ATP7A) from Cricetulus griseus (Chinese hamster).